Reading from the N-terminus, the 164-residue chain is Diphosphoinositol polyphosphate phosphohydrolase 3-alpha (164 aa).

Residues Arg9, 17–19, and 38–40 each bind substrate; these read KKR and SSR. Residues 17–144 enclose the Nudix hydrolase domain; sequence KKRAACLCFR…VHAEYLEKLK (128 aa). Residues Gly49 and Glu65 each contribute to the Mg(2+) site. A Nudix box motif is present at residues 50-71; the sequence is GGMEPEEEPGGAAVREVYEEAG. Residue Glu68 is the Proton acceptor of the active site. Position 69 (Glu69) interacts with Mg(2+). Substrate is bound by residues 89-91, Arg115, and Lys133; that span reads PKH. Positions 144–164 are disordered; the sequence is KLGGSPTNGNSMAPSSPDSDP. A compositionally biased stretch (polar residues) spans 148-164; the sequence is SPTNGNSMAPSSPDSDP.

The protein belongs to the Nudix hydrolase family. DIPP subfamily. Mg(2+) is required as a cofactor. Mn(2+) serves as cofactor. As to expression, mainly expressed in testis and, at lower level in brain. According to PubMed:12121577, it is widely expressed.

The protein resides in the cytoplasm. The enzyme catalyses diphospho-myo-inositol polyphosphate + H2O = myo-inositol polyphosphate + phosphate.. It catalyses the reaction P(1),P(6)-bis(5'-adenosyl) hexaphosphate + H2O = adenosine 5'-pentaphosphate + AMP + 2 H(+). The catalysed reaction is P(1),P(5)-bis(5'-adenosyl) pentaphosphate + H2O = adenosine 5'-tetraphosphate + AMP + 2 H(+). In terms of biological role, cleaves a beta-phosphate from the diphosphate groups in PP-InsP5 (diphosphoinositol pentakisphosphate), suggesting that it may play a role in signal transduction. Also able to catalyze the hydrolysis of dinucleoside oligophosphates, with Ap6A and Ap5A being the preferred substrates. The major reaction products are ADP and p4a from Ap6A and ADP and ATP from Ap5A. Also able to hydrolyze 5-phosphoribose 1-diphosphate. The polypeptide is Diphosphoinositol polyphosphate phosphohydrolase 3-alpha (NUDT10) (Homo sapiens (Human)).